We begin with the raw amino-acid sequence, 188 residues long: Oleosin S2-2 (188 aa).

Residue Ala-2 is modified to N-acetylalanine. The interval 2-51 is polar; that stretch reads ATVERRVQVDPTDKRIHLQPQYEGDVGYGYGYGGRADYKSSGPSSNQIVA. Transmembrane regions (helical) follow at residues 49-69, 74-94, and 96-116; these read IVALIVGVPVGGSLLALAGLT, VIGLMLSVPLFLLFSPVIVPA, and ITIGLAVTAILASGLFGLTGL. The tract at residues 52–125 is hydrophobic; the sequence is LIVGVPVGGS…LSSVSWVLNY (74 aa). Residues 164-188 form a disordered region; it reads DKAHEAHDTSLTTETTEPGKTRRHT. A compositionally biased stretch (polar residues) spans 172–181; it reads TSLTTETTEP.

The protein belongs to the oleosin family.

The protein localises to the lipid droplet. Its subcellular location is the membrane. Its function is as follows. May have a structural role to stabilize the lipid body during desiccation of the seed by preventing coalescence of the oil. Probably interacts with both lipid and phospholipid moieties of lipid bodies. May also provide recognition signals for specific lipase anchorage in lipolysis during seedling growth. The protein is Oleosin S2-2 (S2) of Brassica napus (Rape).